We begin with the raw amino-acid sequence, 175 residues long: Peptide deformylase (175 aa).

The Fe cation site is built by Cys96 and His138. The active site involves Glu139. Fe cation is bound at residue His142.

It belongs to the polypeptide deformylase family. The cofactor is Fe(2+).

The catalysed reaction is N-terminal N-formyl-L-methionyl-[peptide] + H2O = N-terminal L-methionyl-[peptide] + formate. Functionally, removes the formyl group from the N-terminal Met of newly synthesized proteins. Requires at least a dipeptide for an efficient rate of reaction. N-terminal L-methionine is a prerequisite for activity but the enzyme has broad specificity at other positions. The chain is Peptide deformylase from Helicobacter pylori (strain Shi470).